Consider the following 349-residue polypeptide: GTP 3',8-cyclase (349 aa).

One can recognise a Radical SAM core domain in the interval 24-250; it reads PFGRAVTYLR…DIPYRTGGPA (227 aa). R33 serves as a coordination point for GTP. [4Fe-4S] cluster is bound by residues C40 and C44. Y46 is a binding site for S-adenosyl-L-methionine. C47 contributes to the [4Fe-4S] cluster binding site. Position 82 (R82) interacts with GTP. G86 is a binding site for S-adenosyl-L-methionine. T116 is a GTP binding site. An S-adenosyl-L-methionine-binding site is contributed by S140. K176 is a binding site for GTP. Position 210 (M210) interacts with S-adenosyl-L-methionine. Residues C273 and C276 each coordinate [4Fe-4S] cluster. 278-280 is a binding site for GTP; the sequence is RVR. Residue C290 coordinates [4Fe-4S] cluster.

It belongs to the radical SAM superfamily. MoaA family. Monomer and homodimer. [4Fe-4S] cluster is required as a cofactor.

The catalysed reaction is GTP + AH2 + S-adenosyl-L-methionine = (8S)-3',8-cyclo-7,8-dihydroguanosine 5'-triphosphate + 5'-deoxyadenosine + L-methionine + A + H(+). The protein operates within cofactor biosynthesis; molybdopterin biosynthesis. Its function is as follows. Catalyzes the cyclization of GTP to (8S)-3',8-cyclo-7,8-dihydroguanosine 5'-triphosphate. The polypeptide is GTP 3',8-cyclase (Rhizobium meliloti (strain 1021) (Ensifer meliloti)).